A 301-amino-acid chain; its full sequence is rRNA methyltransferase 1, mitochondrial (301 aa).

Residues 1–11 (MIRSRVNLARE) constitute a mitochondrion transit peptide. The interval 121–141 (YNNKNGQDSPHNDLNEGKSSS) is disordered.

It belongs to the class IV-like SAM-binding methyltransferase superfamily. RNA methyltransferase TrmH family.

The protein localises to the mitochondrion. The catalysed reaction is a guanosine in 21S rRNA + S-adenosyl-L-methionine = a 2'-O-methylguanosine in 21S rRNA + S-adenosyl-L-homocysteine + H(+). In terms of biological role, S-adenosyl-L-methionine-dependent 2'-O-ribose methyltransferase that catalyzes the formation of the 2'-O-methylguanosine corresponding to position 2270 in S.cerevisiae 21S mitochondrial large subunit ribosomal RNA (mtLSU rRNA), a universally conserved modification in the peptidyl transferase domain of the mtLSU rRNA. The chain is rRNA methyltransferase 1, mitochondrial from Schizosaccharomyces pombe (strain 972 / ATCC 24843) (Fission yeast).